The sequence spans 271 residues: MSYLLRKPQSHEVSNGVKLVHEVTTSNSDLTYVEFKVLDLASGSSYTEELKKQEICIVAVTGKITVTDHESTFENIGTRESVFERKPTDSVYISNDRAFEITAVSDARVALCYSPSEKQLPTKLIKAEDNGIEHRGQFSNKRTVHNILPDSDPSANSLLVVEVYTDSGNWSSYPPHKHDQDNLPEESFLEETYYHELDPGQGFVFQRVYTDDRSIDETMTVGNENVVIVPAGYHPVGVPDGYTSYYLNVMAGPTRKWKFYNDPAHEWILER.

The protein belongs to the isomerase IolB family.

The enzyme catalyses 5-deoxy-D-glucuronate = 5-dehydro-2-deoxy-D-gluconate. It functions in the pathway polyol metabolism; myo-inositol degradation into acetyl-CoA; acetyl-CoA from myo-inositol: step 4/7. Its function is as follows. Involved in the isomerization of 5-deoxy-glucuronate (5DG) to 5-dehydro-2-deoxy-D-gluconate (DKG or 2-deoxy-5-keto-D-gluconate). The protein is 5-deoxy-glucuronate isomerase (iolB) of Bacillus subtilis (strain 168).